The primary structure comprises 218 residues: Riboflavin synthase (218 aa).

Lumazine-binding repeat units lie at residues Met-1–His-97 and Ile-98–Leu-194. Residues Gly-4–Ile-6, Cys-48–Thr-50, Asp-62–Thr-67, Gly-101–Val-103, Lys-136, Ser-145–Thr-147, and Thr-159–Thr-164 contribute to the 2,4-dihydroxypteridine site.

As to quaternary structure, homotrimer.

It catalyses the reaction 2 6,7-dimethyl-8-(1-D-ribityl)lumazine + H(+) = 5-amino-6-(D-ribitylamino)uracil + riboflavin. The protein operates within cofactor biosynthesis; riboflavin biosynthesis; riboflavin from 2-hydroxy-3-oxobutyl phosphate and 5-amino-6-(D-ribitylamino)uracil: step 2/2. Its function is as follows. Catalyzes the dismutation of two molecules of 6,7-dimethyl-8-ribityllumazine, resulting in the formation of riboflavin and 5-amino-6-(D-ribitylamino)uracil. This is Riboflavin synthase from Photobacterium phosphoreum.